A 530-amino-acid chain; its full sequence is uncharacterized protein (530 aa).

Transmembrane regions (helical) follow at residues 4–23 (FLAANPLIALAVILAVGLAI), 28–47 (LFGVSLGAAAVLIVALVVST), 57–79 (FVFQLGLAMFVYVIGISAGPAFF), 91–113 (LFMITLLVSLTALAWVLIRAFGL), and 148–170 (VIGYSLAYPGAVLGSILVAAVGA). Residues 260–344 (LGGECDTKIE…MGEVRRFLGD (85 aa)) enclose the RCK C-terminal domain. The next 4 helical transmembrane spans lie at 352 to 374 (VNLLPFAIGLSLGLLLGAIPVPL), 379 to 398 (TMYLGFGGGPIVAGLILGAL), 419 to 441 (LGLALFLAGVGTSAGAGFRQALT), and 451 to 473 (VGFAITVTSALVCAVVGMWLLKL).

It belongs to the AAE transporter (TC 2.A.81) family.

Its subcellular location is the cell membrane. This is an uncharacterized protein from Corynebacterium efficiens (strain DSM 44549 / YS-314 / AJ 12310 / JCM 11189 / NBRC 100395).